A 380-amino-acid polypeptide reads, in one-letter code: Cytochrome b (380 aa).

The next 4 helical transmembrane spans lie at 33–53, 77–98, 113–133, and 178–198; these read FGSL…FLAM, WLIR…FLHV, WNMG…GYVL, and FFAF…VHLL. Heme contacts are provided by His-83 and His-97. Residues His-182 and His-196 each contribute to the heme site. His-201 provides a ligand contact to a ubiquinone. 4 helical membrane passes run 226–246, 288–308, 320–340, and 347–367; these read VKDF…TLFF, LGGV…PLLH, ITQT…WIGG, and FIII…IFMP.

It belongs to the cytochrome b family. As to quaternary structure, the cytochrome bc1 complex contains 11 subunits: 3 respiratory subunits (MT-CYB, CYC1 and UQCRFS1), 2 core proteins (UQCRC1 and UQCRC2) and 6 low-molecular weight proteins (UQCRH/QCR6, UQCRB/QCR7, UQCRQ/QCR8, UQCR10/QCR9, UQCR11/QCR10 and a cleavage product of UQCRFS1). This cytochrome bc1 complex then forms a dimer. Heme serves as cofactor.

The protein localises to the mitochondrion inner membrane. Its function is as follows. Component of the ubiquinol-cytochrome c reductase complex (complex III or cytochrome b-c1 complex) that is part of the mitochondrial respiratory chain. The b-c1 complex mediates electron transfer from ubiquinol to cytochrome c. Contributes to the generation of a proton gradient across the mitochondrial membrane that is then used for ATP synthesis. This chain is Cytochrome b (MT-CYB), found in Microtus arvalis (Common vole).